The chain runs to 290 residues: MFSLLRKAIDVNRSRITLHGIKVHSINTFRLIPYSLSLTKQIRFYASEGTDAGEMEKGLSVVNANHENRPFRDLEGYHFNTFTFLKTLMDKGYTEKEAEGLLEVTNMFVTDMLRHSHLNYLSEADFENCSYLFRTALSELRSEKINMRKDQISSLRSGLFSNQREVESLEQLVHEQLNKLNTESKMEFENRKNDTKNEVQQLSARIVELHNLLAVSLGKLRAENERQKWDQIRKAAGVVMAFTGFLVLVIPFGLGVRSRKKEKQDELDNLGSFNLDNKRDDYTDTNLSHM.

A coiled-coil region spans residues 161 to 216; that stretch reads SNQREVESLEQLVHEQLNKLNTESKMEFENRKNDTKNEVQQLSARIVELHNLLAVS. The chain crosses the membrane as a helical span at residues 236 to 256; it reads AGVVMAFTGFLVLVIPFGLGV.

The protein resides in the mitochondrion membrane. This is an uncharacterized protein from Schizosaccharomyces pombe (strain 972 / ATCC 24843) (Fission yeast).